A 400-amino-acid chain; its full sequence is Subtilisin-like protease 7 (400 aa).

The signal sequence occupies residues Met1 to Gly20. A propeptide spanning residues Ala21 to Asn119 is cleaved from the precursor. The 83-residue stretch at Lys36–Ile118 folds into the Inhibitor I9 domain. The 272-residue stretch at Ser129–Lys400 folds into the Peptidase S8 domain. Residues Asp161 and His192 each act as charge relay system in the active site. N-linked (GlcNAc...) asparagine glycosylation is found at Asn222 and Asn252. Ser346 acts as the Charge relay system in catalysis. An N-linked (GlcNAc...) asparagine glycan is attached at Asn396.

This sequence belongs to the peptidase S8 family.

The protein resides in the secreted. Its function is as follows. Secreted subtilisin-like serine protease with keratinolytic activity that contributes to pathogenicity. The protein is Subtilisin-like protease 7 (SUB7) of Arthroderma otae (strain ATCC MYA-4605 / CBS 113480) (Microsporum canis).